A 281-amino-acid chain; its full sequence is Protein ZAR1-like 1.S (281 aa).

The segment at 183 to 267 adopts a 3CxxC-type zinc-finger fold; sequence QKYGFFQCKD…QDLCGRCKGQ (85 aa).

It belongs to the ZAR1 family. As to quaternary structure, component of a cytoplasmic ribonucleoprotein complex together with eif4enif1/4E-T and cpeb1. In terms of tissue distribution, expressed in oocytes.

The protein resides in the cytoplasm. The protein localises to the cytoplasmic ribonucleoprotein granule. Its function is as follows. mRNA-binding protein required for maternal mRNA storage, translation and degradation during oocyte maturation. Controls timing of meiosis during oogenesis. Probably promotes formation of some phase-separated membraneless compartment that stores maternal mRNAs in oocytes: acts by undergoing liquid-liquid phase separation upon binding to maternal mRNAs. Binds to the 3'-UTR of maternal mRNAs, inhibiting their translation. The sequence is that of Protein ZAR1-like 1.S from Xenopus laevis (African clawed frog).